A 289-amino-acid polypeptide reads, in one-letter code: Protoheme IX farnesyltransferase (289 aa).

A run of 9 helical transmembrane segments spans residues 18-38, 40-60, 87-107, 111-131, 139-159, 168-188, 212-232, 234-254, and 269-289; these read VTSL…EQSP, GFLI…SFIF, VVQA…VLAV, LLTA…YTIF, NIVI…AAIG, SLFM…AIFL, SIFF…FLES, MGFL…ILSY, and FFFS…DHLI.

It belongs to the UbiA prenyltransferase family. Protoheme IX farnesyltransferase subfamily.

It localises to the cell inner membrane. The enzyme catalyses heme b + (2E,6E)-farnesyl diphosphate + H2O = Fe(II)-heme o + diphosphate. Its pathway is porphyrin-containing compound metabolism; heme O biosynthesis; heme O from protoheme: step 1/1. Its function is as follows. Converts heme B (protoheme IX) to heme O by substitution of the vinyl group on carbon 2 of heme B porphyrin ring with a hydroxyethyl farnesyl side group. This Leptospira interrogans serogroup Icterohaemorrhagiae serovar copenhageni (strain Fiocruz L1-130) protein is Protoheme IX farnesyltransferase.